We begin with the raw amino-acid sequence, 356 residues long: 5-amino-6-(D-ribitylamino)uracil--L-tyrosine 4-hydroxyphenyl transferase (356 aa).

One can recognise a Radical SAM core domain in the interval 47 to 281; that stretch reads VTYIVNRNIN…AIARILLNTH (235 aa). Cys-61, Cys-65, and Cys-68 together coordinate [4Fe-4S] cluster.

It belongs to the radical SAM superfamily. CofH family. Consists of two subunits, CofG and CofH. The cofactor is [4Fe-4S] cluster.

The catalysed reaction is 5-amino-6-(D-ribitylamino)uracil + L-tyrosine + S-adenosyl-L-methionine = 5-amino-5-(4-hydroxybenzyl)-6-(D-ribitylimino)-5,6-dihydrouracil + 2-iminoacetate + 5'-deoxyadenosine + L-methionine + H(+). The protein operates within cofactor biosynthesis; coenzyme F0 biosynthesis. Functionally, catalyzes the radical-mediated synthesis of 5-amino-5-(4-hydroxybenzyl)-6-(D-ribitylimino)-5,6-dihydrouracil from 5-amino-6-(D-ribitylamino)uracil and L-tyrosine. This Methanococcoides burtonii (strain DSM 6242 / NBRC 107633 / OCM 468 / ACE-M) protein is 5-amino-6-(D-ribitylamino)uracil--L-tyrosine 4-hydroxyphenyl transferase.